Consider the following 414-residue polypeptide: Small ribosomal subunit protein mS46 (414 aa).

A compositionally biased stretch (polar residues) spans 20–35 (LNAQQQQRPFSSTTTR). Disordered stretches follow at residues 20–71 (LNAQ…EAAV) and 168–229 (AGPG…DAPP). Low complexity-rich tracts occupy residues 45–59 (PAAAPSTPRAAAPGP) and 168–200 (AGPGAAAGRPRFGAAASPGAGPTGAARRPPFGA). Basic and acidic residues predominate over residues 205–224 (PAGDKKRSGGSGDKRPRGDD).

The protein belongs to the mitochondrion-specific ribosomal protein mS46 family. Component of the mitochondrial small ribosomal subunit (mt-SSU). Mature N.crassa 74S mitochondrial ribosomes consist of a small (37S) and a large (54S) subunit. The 37S small subunit contains a 16S ribosomal RNA (16S mt-rRNA) and 32 different proteins. The 54S large subunit contains a 23S rRNA (23S mt-rRNA) and 42 different proteins.

The protein localises to the mitochondrion. Its function is as follows. Component of the mitochondrial ribosome (mitoribosome), a dedicated translation machinery responsible for the synthesis of mitochondrial genome-encoded proteins, including at least some of the essential transmembrane subunits of the mitochondrial respiratory chain. The mitoribosomes are attached to the mitochondrial inner membrane and translation products are cotranslationally integrated into the membrane. This Neurospora crassa (strain ATCC 24698 / 74-OR23-1A / CBS 708.71 / DSM 1257 / FGSC 987) protein is Small ribosomal subunit protein mS46 (rsm28).